A 365-amino-acid polypeptide reads, in one-letter code: Red-sensitive opsin (365 aa).

At 1-51 (MASQLNEAIFAARRRNDDDDTTRSSVFTYTNSNNTRGPFEGPNYHIAPRWV) the chain is on the extracellular side. N-linked (GlcNAc...) asparagine glycosylation is present at Asn-33. The helical transmembrane segment at 52-76 (YNLTSIWMIFVVFASVFTNGLVIVA) threads the bilayer. Over 77–88 (TLKFKKLRHPLN) the chain is Cytoplasmic. Residues 89–113 (WILVNMAIADLGETVIASTISVFNQ) form a helical membrane-spanning segment. Residues 114–128 (IFGYFILGHPMCVLE) lie on the Extracellular side of the membrane. A disulfide bridge connects residues Cys-125 and Cys-202. Residues 129-148 (GFTVSTCGITALWSLTVIAW) form a helical membrane-spanning segment. Topologically, residues 149 to 167 (ERWFVVCKPFGNIKFDEKL) are cytoplasmic. The helical transmembrane segment at 168 to 191 (AATGIIFSWVWSAGWCAPPMFGWS) threads the bilayer. Over 192–217 (RFWPHGLKTSCGPDVFSGSSDPGVQS) the chain is Extracellular. A helical membrane pass occupies residues 218 to 245 (YMLVLMITCCIIPLAIIILCYLHVWWTI). The Cytoplasmic portion of the chain corresponds to 246–267 (RQVAQQQKESESTQKAEREVSR). A helical transmembrane segment spans residues 268-291 (MVVVMIVAYIFCWGPYTFFACFAA). Topologically, residues 292 to 299 (FSPGYSFH) are extracellular. A helical membrane pass occupies residues 300-324 (PLAAALPAYFAKSATIYNPIIYVFM). Lys-311 carries the post-translational modification N6-(retinylidene)lysine. At 325–365 (NRQFRNCIYQMFGKKVDDGSEVSSTSRTEVSSVSNSSVSPA) the chain is on the cytoplasmic side. The interval 342 to 365 (DGSEVSSTSRTEVSSVSNSSVSPA) is disordered. Residues 345–365 (EVSSTSRTEVSSVSNSSVSPA) are compositionally biased toward low complexity.

This sequence belongs to the G-protein coupled receptor 1 family. Opsin subfamily. In terms of processing, phosphorylated on some or all of the serine and threonine residues present in the C-terminal region.

The protein localises to the membrane. Functionally, visual pigments are the light-absorbing molecules that mediate vision. They consist of an apoprotein, opsin, covalently linked to cis-retinal. In Xenopus laevis (African clawed frog), this protein is Red-sensitive opsin (opn1lw1).